A 533-amino-acid chain; its full sequence is Glucose-6-phosphate isomerase (533 aa).

Glutamate 341 acts as the Proton donor in catalysis. Catalysis depends on residues histidine 372 and lysine 501.

Belongs to the GPI family.

It is found in the cytoplasm. The enzyme catalyses alpha-D-glucose 6-phosphate = beta-D-fructose 6-phosphate. It participates in carbohydrate biosynthesis; gluconeogenesis. It functions in the pathway carbohydrate degradation; glycolysis; D-glyceraldehyde 3-phosphate and glycerone phosphate from D-glucose: step 2/4. Its function is as follows. Catalyzes the reversible isomerization of glucose-6-phosphate to fructose-6-phosphate. The protein is Glucose-6-phosphate isomerase of Cereibacter sphaeroides (strain ATCC 17025 / ATH 2.4.3) (Rhodobacter sphaeroides).